The sequence spans 503 residues: Probable mitochondrial-processing peptidase subunit alpha-1, mitochondrial (503 aa).

The transit peptide at 1 to 59 directs the protein to the mitochondrion; sequence MYRTAASRARALKGVLTRSLRPARYASSSAVAETSSSTPAYLSWLSGGSRAALTSLDMP.

Belongs to the peptidase M16 family. Heterodimer of alpha and beta subunits, forming the mitochondrial processing protease (MPP) in which subunit alpha is involved in substrate recognition and binding and subunit beta is the catalytic subunit. Component of the ubiquinol-cytochrome c oxidoreductase (cytochrome b-c1 complex, complex III, CIII), a multisubunit enzyme composed of 10 subunits. The complex is composed of 3 respiratory subunits cytochrome b (MT-CYB), cytochrome c1 (CYC1-1 or CYC1-2) and Rieske protein (UCR1-1 or UCR1-2), 2 core protein subunits MPPalpha1 (or MPPalpha2) and MPPB, and 5 low-molecular weight protein subunits QCR7-1 (or QCR7-2), UCRQ-1 (or UCRQ-2), QCR9, UCRY and probably QCR6-1 (or QCR6-2). The complex exists as an obligatory dimer and forms supercomplexes (SCs) in the inner mitochondrial membrane with NADH-ubiquinone oxidoreductase (complex I, CI), resulting in different assemblies (supercomplexes SCI(1)III(2) and SCI(2)III(4)).

The protein resides in the mitochondrion matrix. The protein localises to the mitochondrion inner membrane. Functionally, substrate recognition and binding subunit of the essential mitochondrial processing protease (MPP), which cleaves the mitochondrial sequence off newly imported precursors proteins. Its function is as follows. Component of the ubiquinol-cytochrome c oxidoreductase, a multisubunit transmembrane complex that is part of the mitochondrial electron transport chain which drives oxidative phosphorylation. The respiratory chain contains 3 multisubunit complexes succinate dehydrogenase (complex II, CII), ubiquinol-cytochrome c oxidoreductase (cytochrome b-c1 complex, complex III, CIII) and cytochrome c oxidase (complex IV, CIV), that cooperate to transfer electrons derived from NADH and succinate to molecular oxygen, creating an electrochemical gradient over the inner membrane that drives transmembrane transport and the ATP synthase. The cytochrome b-c1 complex catalyzes electron transfer from ubiquinol to cytochrome c, linking this redox reaction to translocation of protons across the mitochondrial inner membrane, with protons being carried across the membrane as hydrogens on the quinol. In the process called Q cycle, 2 protons are consumed from the matrix, 4 protons are released into the intermembrane space and 2 electrons are passed to cytochrome c. The chain is Probable mitochondrial-processing peptidase subunit alpha-1, mitochondrial (MPPalpha1) from Arabidopsis thaliana (Mouse-ear cress).